A 537-amino-acid chain; its full sequence is Chaperonin GroEL 3 (537 aa).

ATP contacts are provided by residues 30-33 (TLGP), 87-91 (DGTTT), Gly414, 480-482 (DAL), and Asp496.

It belongs to the chaperonin (HSP60) family. In terms of assembly, forms a cylinder of 14 subunits composed of two heptameric rings stacked back-to-back. Interacts with the co-chaperonin GroES.

It localises to the cytoplasm. It catalyses the reaction ATP + H2O + a folded polypeptide = ADP + phosphate + an unfolded polypeptide.. Together with its co-chaperonin GroES, plays an essential role in assisting protein folding. The GroEL-GroES system forms a nano-cage that allows encapsulation of the non-native substrate proteins and provides a physical environment optimized to promote and accelerate protein folding. This chain is Chaperonin GroEL 3, found in Acaryochloris marina (strain MBIC 11017).